The following is a 435-amino-acid chain: GTPase Obg (435 aa).

Residues 6-164 form the Obg domain; that stretch reads ADFVDRVKIF…RWLELELKIL (159 aa). Residues 165–335 form the OBG-type G domain; sequence ADVGLVGYPN…LVSKLASIVR (171 aa). Residues 171 to 178, 196 to 200, 217 to 220, 287 to 290, and 316 to 318 each bind GTP; these read GYPNVGKS, FTTLI, DIPG, NKID, and SAL. Positions 178 and 198 each coordinate Mg(2+). One can recognise an OCT domain in the interval 357 to 435; that stretch reads RRLPEKFHLE…IGDFEFEYRE (79 aa).

Belongs to the TRAFAC class OBG-HflX-like GTPase superfamily. OBG GTPase family. In terms of assembly, monomer. Requires Mg(2+) as cofactor.

Its subcellular location is the cytoplasm. An essential GTPase which binds GTP, GDP and possibly (p)ppGpp with moderate affinity, with high nucleotide exchange rates and a fairly low GTP hydrolysis rate. Plays a role in control of the cell cycle, stress response, ribosome biogenesis and in those bacteria that undergo differentiation, in morphogenesis control. This chain is GTPase Obg, found in Thermotoga sp. (strain RQ2).